Consider the following 68-residue polypeptide: Large ribosomal subunit protein uL29 (68 aa).

It belongs to the universal ribosomal protein uL29 family.

In Roseobacter denitrificans (strain ATCC 33942 / OCh 114) (Erythrobacter sp. (strain OCh 114)), this protein is Large ribosomal subunit protein uL29.